The primary structure comprises 63 residues: Large ribosomal subunit protein bL35 (63 aa).

The segment covering 1-15 (MPKIKTHRGAAKRFK) has biased composition (basic residues). The interval 1–26 (MPKIKTHRGAAKRFKQTAGGKWKGSH) is disordered.

The protein belongs to the bacterial ribosomal protein bL35 family.

The polypeptide is Large ribosomal subunit protein bL35 (Pelotomaculum thermopropionicum (strain DSM 13744 / JCM 10971 / SI)).